Reading from the N-terminus, the 183-residue chain is Pentapeptide repeat protein MfpA (183 aa).

Residues 113–147 (SLVDTDLRKCVLRGADLSGARTTGARLDDADLRGA) form the Pentapeptide repeat domain.

Belongs to the pentapeptide repeat protein family. As to quaternary structure, homodimer. Probably interacts with DNA gyrase.

In terms of biological role, might be involved in fluoroquinolone resistance. Inhibits ATP-independent DNA relaxation, ATP-dependent DNA supercoiling and ATP-dependent decatenation by endogenous gyrase, 50% inhibition occurs at 2 uM; inhibition is abolished if GyrA is mutated (Asp-87 to Gly or His). Also inhibits fluoroquinolone-promoted dsDNA cleavage. Increases fluoroquinolone (ciprofloxacin or moxifloxacin) inhibition of gyrase supercoiling activity in a concentration-dependent manner. Inhibits DNA relaxation and supercoiling by E.coli gyrase. Forms a structure that exhibits size, shape and electrostatic similarity to B-form DNA; it may bind to DNA gyrase which is postulated to protect it from fluoroquinolones. This chain is Pentapeptide repeat protein MfpA, found in Mycobacterium tuberculosis (strain ATCC 25618 / H37Rv).